A 424-amino-acid chain; its full sequence is Endoglucanase 1 (424 aa).

An N-terminal signal peptide occupies residues methionine 1–alanine 18. Intrachain disulfides connect cysteine 35-cysteine 41, cysteine 68-cysteine 90, cysteine 80-cysteine 86, cysteine 156-cysteine 384, cysteine 188-cysteine 211, cysteine 192-cysteine 210, cysteine 231-cysteine 250, cysteine 239-cysteine 244, and cysteine 255-cysteine 331. The N-linked (GlcNAc...) asparagine glycan is linked to asparagine 76. Glutamate 213 functions as the Nucleophile in the catalytic mechanism. Catalysis depends on glutamate 218, which acts as the Proton donor. Residues asparagine 271 and asparagine 385 are each glycosylated (N-linked (GlcNAc...) asparagine).

It belongs to the glycosyl hydrolase 7 (cellulase C) family. In terms of assembly, monomer.

It localises to the secreted. The enzyme catalyses Endohydrolysis of (1-&gt;4)-beta-D-glucosidic linkages in cellulose, lichenin and cereal beta-D-glucans.. Its function is as follows. Endoglucanase that is involved in the biological conversion of cellulose to glucose. Hydrolyzes internal beta-1,4-glucosidic bonds. This chain is Endoglucanase 1, found in Pyricularia oryzae (strain 70-15 / ATCC MYA-4617 / FGSC 8958) (Rice blast fungus).